Consider the following 345-residue polypeptide: Dihydroorotase (345 aa).

The Zn(2+) site is built by H13 and H15. Substrate-binding positions include 15-17 (HFR) and N41. Residues K98, H135, and H173 each coordinate Zn(2+). Residue K98 is modified to N6-carboxylysine. Position 135 (H135) interacts with substrate. L218 serves as a coordination point for substrate. D246 contributes to the Zn(2+) binding site. The active site involves D246. Substrate contacts are provided by H250 and A262.

It belongs to the metallo-dependent hydrolases superfamily. DHOase family. Class II DHOase subfamily. As to quaternary structure, homodimer. It depends on Zn(2+) as a cofactor.

The enzyme catalyses (S)-dihydroorotate + H2O = N-carbamoyl-L-aspartate + H(+). It functions in the pathway pyrimidine metabolism; UMP biosynthesis via de novo pathway; (S)-dihydroorotate from bicarbonate: step 3/3. Functionally, catalyzes the reversible cyclization of carbamoyl aspartate to dihydroorotate. In Shewanella piezotolerans (strain WP3 / JCM 13877), this protein is Dihydroorotase.